We begin with the raw amino-acid sequence, 232 residues long: 7-cyano-7-deazaguanine synthase 1 (232 aa).

7 to 17 serves as a coordination point for ATP; that stretch reads CSGGLDSVSLA. Zn(2+) is bound by residues Cys-185, Cys-193, Cys-196, and Cys-199.

The protein belongs to the QueC family. Zn(2+) serves as cofactor.

The enzyme catalyses 7-carboxy-7-deazaguanine + NH4(+) + ATP = 7-cyano-7-deazaguanine + ADP + phosphate + H2O + H(+). Its pathway is purine metabolism; 7-cyano-7-deazaguanine biosynthesis. Catalyzes the ATP-dependent conversion of 7-carboxy-7-deazaguanine (CDG) to 7-cyano-7-deazaguanine (preQ(0)). This Mesorhizobium japonicum (strain LMG 29417 / CECT 9101 / MAFF 303099) (Mesorhizobium loti (strain MAFF 303099)) protein is 7-cyano-7-deazaguanine synthase 1.